Here is a 410-residue protein sequence, read N- to C-terminus: Lipid droplet-regulating VLDL assembly factor AUP1 (410 aa).

An N-acetylmethionine modification is found at methionine 1. Residues 1-20 (MELPSGPGPERLFDSHRLPG) lie on the Cytoplasmic side of the membrane. Serine 5 carries the phosphoserine modification. The stretch at 21–41 (DCFLLLVLLLYAPVGFCLLVL) is an intramembrane region. The Cytoplasmic segment spans residues 42 to 410 (RLFLGIHVFL…FTERRAQEAD (369 aa)). The interval 255 to 295 (TGTRLTPADKAEHMKRQRHPRLRPQSAQSSFPPSPGPSPDV) is disordered. Residues serine 288 and serine 292 each carry the phosphoserine modification. One can recognise a CUE domain in the interval 296-338 (QLATLAQRVKEVLPHVPLGVIQRDLAKTGCVDLTITNLLEGAV). A disordered region spans residues 350 to 369 (QSLPTASASKFPSSGPVTPQ). Serine 363 bears the Phosphoserine mark. The residue at position 367 (threonine 367) is a Phosphothreonine.

This sequence belongs to the AUP1 family. Identified in a complex that contains SEL1L, OS9, FAF2/UBXD8, UBE2J1/UBC6E and AUP1. Interacts with the cytoplasmic tail of ITGA2B, ITGA1, ITGA2, ITGA5, ITGAV and ITGAM. Interacts (via C-terminus) with ubiquitin-conjugating enzyme UBE2G2; the interaction recruits UBE2G2 to lipid droplets. Interacts with ubiquitin ligases AMFR/gp78 and RNF139/TRC8; this promotes interaction of UBE2G2 with AMFR and RNF139. Interacts with apolipoprotein APOB. In terms of assembly, (Microbial infection) Interacts with Dengue virus NS4A; the interaction occurs in the presence of Dengue virus NS4B and induces lipophagy which facilitates production of virus progeny. Monoubiquitinated and diubiquitinated. In terms of processing, (Microbial infection) Not ubiquitinated following Dengue virus infection. Detected in blood platelets and leukocytes (at protein level). Ubiquitous. Highly expressed in placenta, liver, kidney, skeletal muscle, heart and brain.

The protein resides in the endoplasmic reticulum membrane. Its subcellular location is the lipid droplet. The protein localises to the cytoplasmic vesicle. It localises to the autophagosome. Plays a role in the translocation of terminally misfolded proteins from the endoplasmic reticulum lumen to the cytoplasm and their degradation by the proteasome. Plays a role in lipid droplet formation. Induces lipid droplet clustering. Recruits ubiquitin-conjugating enzyme UBE2G2 to lipid droplets which facilitates its interaction with ubiquitin ligases AMFR/gp78 and RNF139/TRC8, leading to sterol-induced ubiquitination of HMGCR and its subsequent proteasomal degradation. Also required for the degradation of INSIG1, SREBF1 and SREBF2. Plays a role in regulating assembly and secretion of very low density lipoprotein particles and stability of apolipoprotein APOB. Functionally, (Microbial infection) Following Dengue virus infection, required for induction of lipophagy which facilitates production of virus progeny particles. The protein is Lipid droplet-regulating VLDL assembly factor AUP1 of Homo sapiens (Human).